A 236-amino-acid chain; its full sequence is CD81 antigen (236 aa).

The Cytoplasmic portion of the chain corresponds to 1-12; the sequence is MGVEGCTKCIKY. Residues 13-33 form a helical membrane-spanning segment; that stretch reads LLFVFNFVFWLAGGVILGVAL. At 34-63 the chain is on the extracellular side; it reads WLRHDPQTTSLLYLELGNKPAPNTFYVGIY. The helical transmembrane segment at 64–84 threads the bilayer; the sequence is ILIAVGAVMMFVGFLGCYGAI. At 85–89 the chain is on the cytoplasmic side; the sequence is QESQC. Residues 90–112 traverse the membrane as a helical segment; that stretch reads LLGTFFTCLVILFACEVAAGIWG. At 113 to 201 the chain is on the extracellular side; that stretch reads FVNKDQIAKD…QKIDELFSGK (89 aa). 2 disulfides stabilise this stretch: C156–C190 and C157–C175. A helical membrane pass occupies residues 202–224; the sequence is LYLIGIAAIVVAVIMIFEMILSM. Position 219 (E219) interacts with cholesterol. At 225–236 the chain is on the cytoplasmic side; that stretch reads VLCCGIRNSSVY.

This sequence belongs to the tetraspanin (TM4SF) family. As to quaternary structure, homodimer. Part of a complex composed of CD19, CR2/CD21, CD81 and IFITM1/CD225 in the membrane of mature B cells. Interacts (via the second extracellular domain) with CD19; this interaction is initiated early during biosynthesis in the ER and enables trafficking of only properly folded CD19. Part of a complex that includes MHC class II/HLA-DR molecules and IFITM1. Interacts with IFITM1. Interacts with IFITM2 and IFITM3. Part of integrin-tetraspanin complex composed of CD9, CD81, beta-1 and beta-2 integrins in the membrane of monocyte/macrophages. Interacts (via the second extracellular domain) with integrin ITGAV:ITGB3. Interacts with CD247/CD3 zeta, ICAM1 and CD9 at the immune synapse on T cell membrane. Part of a GPCR-tetraspanin complex consisting at least of ADGRG1, CD81, possibly CD9, and GNA11 in which CD81 enhances the association of ADGRG1 with GNA11. Part of a complex composed of CD9, CD81, PTGFRN and IGSF8. Interacts directly with IGSF8. Interacts with CD53 and SCIMP. Interacts with SAMHD1 (via its C-terminus). Interacts with glypican GPC3 and with the transcriptional repressor HHEX; binding to GPC3 decreases the availability of free CD81 for binding to HHEX, resulting in nuclear translocation of HHEX and transcriptional repression. Interacts with CLDN1. Interacts with CLDN6 and CLDN9. Post-translationally, not glycosylated. Likely constitutively palmitoylated at low levels. Protein palmitoylation is up-regulated upon coligation of BCR and CD9-C2R-CD81 complexes in lipid rafts. As to expression, expressed in oocytes (at protein level). Highly expressed in granulosa cells. Expressed in skeletal muscle mainly in endothelial cells of endomysial capillaries, in satellite cells and myoblasts (at protein level). Expressed in hepatocytes (at protein level).

It localises to the cell membrane. The protein localises to the basolateral cell membrane. Functionally, structural component of specialized membrane microdomains known as tetraspanin-enriched microdomains (TERMs), which act as platforms for receptor clustering and signaling. Essential for trafficking and compartmentalization of CD19 receptor on the cell surface of activated B cells. Upon initial encounter with a microbial pathogen, enables the assembly of CD19-CR2 and B cell receptor complexes at signaling TERMs, lowering the threshold dose of antigen required to trigger B cell clonal expansion and humoral immune response. In T cells, associates with CD4 or CD8 coreceptors and defines the maturation state of antigen-induced synapses with B cells. Facilitates localization of CD3 in these immune synapses, required for costimulation and sustained activation of T cells, preferentially triggering T helper type 2 immune response. Can act both as positive and negative regulator of homotypic or heterotypic cell-cell fusion processes. In myoblasts, associates with another tetraspanin CD9 in complex with PTGFRN and inhibits myotube fusion during muscle regeneration. In macrophages, associates with CD9 and beta-1 and beta-2 integrins, and prevents macrophage fusion into multinucleated giant cells specialized in ingesting complement-opsonized large particles. Also prevents the fusion between mononuclear cell progenitors into osteoclasts in charge of bone resorption. Positively regulates sperm-egg fusion and may be involved in the acrosome reaction. Regulates protein trafficking in intracellular compartments. In T cells, associates with dNTPase SAMHD1 and defines its subcellular location, enabling its degradation by the proteasome and thereby controlling intracellular dNTP levels. Also regulates integrin-dependent migration of macrophages, particularly relevant for inflammatory response in the lung. In terms of biological role, (Microbial infection) Specifically required for Plasmodium yoelii infectivity of hepatocytes, controlling sporozoite entry in hepatocytes via the parasitophorous vacuole and subsequent parasite differentiation to exoerythrocytic forms. This chain is CD81 antigen, found in Mus musculus (Mouse).